Consider the following 131-residue polypeptide: Biogenesis of lysosome-related organelles complex 1 subunit CNL1 (131 aa).

The tract at residues 1-29 is disordered; sequence MSAPDSNSGHAHDSAQNEGAAEGTRDPFG. A coiled-coil region spans residues 73-101; it reads DAIDINIEEMRRILQKCEELETHFDMLDQ.

This sequence belongs to the BLOC1S4 family. As to quaternary structure, component of the biogenesis of lysosome-related organelles complex-1 (BLOC-1).

Its subcellular location is the cytoplasm. Its function is as follows. Component of the biogenesis of lysosome-related organelles complex-1 (BLOC-1), a complex that is involved in endosomal cargo sorting. The polypeptide is Biogenesis of lysosome-related organelles complex 1 subunit CNL1 (CLN1) (Lachancea thermotolerans (strain ATCC 56472 / CBS 6340 / NRRL Y-8284) (Yeast)).